The primary structure comprises 212 residues: 2-C-methyl-D-erythritol 4-phosphate cytidylyltransferase (212 aa).

This sequence belongs to the IspD/TarI cytidylyltransferase family. IspD subfamily.

The catalysed reaction is 2-C-methyl-D-erythritol 4-phosphate + CTP + H(+) = 4-CDP-2-C-methyl-D-erythritol + diphosphate. It participates in isoprenoid biosynthesis; isopentenyl diphosphate biosynthesis via DXP pathway; isopentenyl diphosphate from 1-deoxy-D-xylulose 5-phosphate: step 2/6. Functionally, catalyzes the formation of 4-diphosphocytidyl-2-C-methyl-D-erythritol from CTP and 2-C-methyl-D-erythritol 4-phosphate (MEP). The chain is 2-C-methyl-D-erythritol 4-phosphate cytidylyltransferase from Chlamydia caviae (strain ATCC VR-813 / DSM 19441 / 03DC25 / GPIC) (Chlamydophila caviae).